Reading from the N-terminus, the 931-residue chain is Elicitor of plant defense protein 1 (931 aa).

A disordered region spans residues 13-32 (NYNSVIPPPEPLNTDPDMHP). In terms of domain architecture, uDENN spans 19–277 (PPPEPLNTDP…NLCTEAFNPL (259 aa)). The region spanning 301 to 433 (EIPGSRSIDL…ARRKLMSLLQ (133 aa)) is the cDENN domain. A dDENN domain is found at 435-799 (AAPHKLRYGV…DREMQPANNA (365 aa)). Disordered stretches follow at residues 478–552 (LGKW…SRSD) and 566–586 (SGHF…DKHP). Residues 521–537 (TSKSGKTSPQSSVSPVS) show a composition bias toward polar residues. Residues 566-575 (SGHFGEEKMR) are compositionally biased toward basic and acidic residues. A Phorbol-ester/DAG-type zinc finger spans residues 666-714 (GHCFNWIPKDNTSICNICNDHAEGDGIYKCTGCKIFSHGRCLGHASLVC).

It belongs to the EPD1 elicitor family.

It localises to the secreted. Its subcellular location is the host cell. In terms of biological role, acts as an elicitor that triggers cell death and defense responses in the host plants. In Fusarium odoratissimum (strain NRRL 54006), this protein is Elicitor of plant defense protein 1.